The following is a 671-amino-acid chain: DNA ligase (671 aa).

Residues 32–36 (DAEYD), 81–82 (SL), and Glu113 each bind NAD(+). Residue Lys115 is the N6-AMP-lysine intermediate of the active site. NAD(+) contacts are provided by Arg136, Glu173, Lys290, and Lys314. Residues Cys408, Cys411, Cys426, and Cys432 each contribute to the Zn(2+) site. Positions 593 to 671 (EIDSPFAGKT…ETEMLRLLGS (79 aa)) constitute a BRCT domain.

This sequence belongs to the NAD-dependent DNA ligase family. LigA subfamily. Mg(2+) serves as cofactor. The cofactor is Mn(2+).

The enzyme catalyses NAD(+) + (deoxyribonucleotide)n-3'-hydroxyl + 5'-phospho-(deoxyribonucleotide)m = (deoxyribonucleotide)n+m + AMP + beta-nicotinamide D-nucleotide.. Functionally, DNA ligase that catalyzes the formation of phosphodiester linkages between 5'-phosphoryl and 3'-hydroxyl groups in double-stranded DNA using NAD as a coenzyme and as the energy source for the reaction. It is essential for DNA replication and repair of damaged DNA. In Escherichia coli O1:K1 / APEC, this protein is DNA ligase.